Consider the following 245-residue polypeptide: UPF0246 protein Cgl1995/cg2186 (245 aa).

Belongs to the UPF0246 family.

This chain is UPF0246 protein Cgl1995/cg2186, found in Corynebacterium glutamicum (strain ATCC 13032 / DSM 20300 / JCM 1318 / BCRC 11384 / CCUG 27702 / LMG 3730 / NBRC 12168 / NCIMB 10025 / NRRL B-2784 / 534).